The primary structure comprises 254 residues: Arginine transport ATP-binding protein ArgV (254 aa).

The ABC transporter domain occupies 6–250 (IDAQQVCKNY…PKEQRTKDFL (245 aa)). 38–45 (GPSGSGKS) contributes to the ATP binding site.

It belongs to the ABC transporter superfamily. The complex is probably composed of two ATP-binding proteins (ArgV), two transmembrane proteins (ArgU) and a solute-binding protein (ArgT).

The protein resides in the cell membrane. The catalysed reaction is a polar amino acid(out) + ATP + H2O = a polar amino acid(in) + ADP + phosphate + H(+). It catalyses the reaction L-arginine(out) + ATP + H2O = L-arginine(in) + ADP + phosphate + H(+). Its function is as follows. Part of the ABC transporter complex ArgTUV involved in L-arginine import. May also transport L-citrulline. Probably responsible for energy coupling to the transport system. The polypeptide is Arginine transport ATP-binding protein ArgV (Corynebacterium glutamicum (strain ATCC 13032 / DSM 20300 / JCM 1318 / BCRC 11384 / CCUG 27702 / LMG 3730 / NBRC 12168 / NCIMB 10025 / NRRL B-2784 / 534)).